A 383-amino-acid polypeptide reads, in one-letter code: Anhydro-N-acetylmuramic acid kinase (383 aa).

Position 9–16 (9–16 (GTSVDSID)) interacts with ATP.

This sequence belongs to the anhydro-N-acetylmuramic acid kinase family.

It catalyses the reaction 1,6-anhydro-N-acetyl-beta-muramate + ATP + H2O = N-acetyl-D-muramate 6-phosphate + ADP + H(+). It participates in amino-sugar metabolism; 1,6-anhydro-N-acetylmuramate degradation. It functions in the pathway cell wall biogenesis; peptidoglycan recycling. Catalyzes the specific phosphorylation of 1,6-anhydro-N-acetylmuramic acid (anhMurNAc) with the simultaneous cleavage of the 1,6-anhydro ring, generating MurNAc-6-P. Is required for the utilization of anhMurNAc either imported from the medium or derived from its own cell wall murein, and thus plays a role in cell wall recycling. The chain is Anhydro-N-acetylmuramic acid kinase from Crocosphaera subtropica (strain ATCC 51142 / BH68) (Cyanothece sp. (strain ATCC 51142)).